Reading from the N-terminus, the 119-residue chain is Large ribosomal subunit protein uL24 (119 aa).

It belongs to the universal ribosomal protein uL24 family. In terms of assembly, part of the 50S ribosomal subunit.

Functionally, one of two assembly initiator proteins, it binds directly to the 5'-end of the 23S rRNA, where it nucleates assembly of the 50S subunit. In terms of biological role, located at the polypeptide exit tunnel on the outside of the subunit. In Saccharolobus solfataricus (strain ATCC 35092 / DSM 1617 / JCM 11322 / P2) (Sulfolobus solfataricus), this protein is Large ribosomal subunit protein uL24.